The primary structure comprises 148 residues: Sec-independent protein translocase protein TatB (148 aa).

The chain crosses the membrane as a helical span at residues 1–21 (MFDIGFWELVVIGIVALVVLG).

This sequence belongs to the TatB family. The Tat system comprises two distinct complexes: a TatABC complex, containing multiple copies of TatA, TatB and TatC subunits, and a separate TatA complex, containing only TatA subunits. Substrates initially bind to the TatABC complex, which probably triggers association of the separate TatA complex to form the active translocon.

The protein localises to the cell inner membrane. Part of the twin-arginine translocation (Tat) system that transports large folded proteins containing a characteristic twin-arginine motif in their signal peptide across membranes. Together with TatC, TatB is part of a receptor directly interacting with Tat signal peptides. TatB may form an oligomeric binding site that transiently accommodates folded Tat precursor proteins before their translocation. The polypeptide is Sec-independent protein translocase protein TatB (Aeromonas salmonicida (strain A449)).